Here is a 258-residue protein sequence, read N- to C-terminus: Imidazole glycerol phosphate synthase subunit HisF (258 aa).

Residues Asp11 and Asp130 contribute to the active site.

Belongs to the HisA/HisF family. As to quaternary structure, heterodimer of HisH and HisF.

Its subcellular location is the cytoplasm. It catalyses the reaction 5-[(5-phospho-1-deoxy-D-ribulos-1-ylimino)methylamino]-1-(5-phospho-beta-D-ribosyl)imidazole-4-carboxamide + L-glutamine = D-erythro-1-(imidazol-4-yl)glycerol 3-phosphate + 5-amino-1-(5-phospho-beta-D-ribosyl)imidazole-4-carboxamide + L-glutamate + H(+). The protein operates within amino-acid biosynthesis; L-histidine biosynthesis; L-histidine from 5-phospho-alpha-D-ribose 1-diphosphate: step 5/9. Its function is as follows. IGPS catalyzes the conversion of PRFAR and glutamine to IGP, AICAR and glutamate. The HisF subunit catalyzes the cyclization activity that produces IGP and AICAR from PRFAR using the ammonia provided by the HisH subunit. The chain is Imidazole glycerol phosphate synthase subunit HisF from Xanthomonas campestris pv. campestris (strain 8004).